Here is a 134-residue protein sequence, read N- to C-terminus: Profilin-3 (134 aa).

Cys13 and Cys118 are joined by a disulfide. The short motif at 84 to 100 is the Involved in PIP2 interaction element; the sequence is AVIRGKKGSGGITIKKT. Thr114 is subject to Phosphothreonine.

Belongs to the profilin family. As to quaternary structure, occurs in many kinds of cells as a complex with monomeric actin in a 1:1 ratio. Post-translationally, phosphorylated by MAP kinases.

Its subcellular location is the cytoplasm. The protein localises to the cytoskeleton. Functionally, binds to actin and affects the structure of the cytoskeleton. At high concentrations, profilin prevents the polymerization of actin, whereas it enhances it at low concentrations. The sequence is that of Profilin-3 from Olea europaea (Common olive).